The sequence spans 271 residues: NH(3)-dependent NAD(+) synthetase (271 aa).

43–50 (GISGGQDS) serves as a coordination point for ATP. Aspartate 49 contacts Mg(2+). A deamido-NAD(+)-binding site is contributed by arginine 137. ATP is bound at residue threonine 157. Residue glutamate 162 coordinates Mg(2+). 2 residues coordinate deamido-NAD(+): lysine 170 and aspartate 177. Residues lysine 186 and threonine 208 each coordinate ATP. 257-258 (HK) contacts deamido-NAD(+).

The protein belongs to the NAD synthetase family. In terms of assembly, homodimer.

The enzyme catalyses deamido-NAD(+) + NH4(+) + ATP = AMP + diphosphate + NAD(+) + H(+). Its pathway is cofactor biosynthesis; NAD(+) biosynthesis; NAD(+) from deamido-NAD(+) (ammonia route): step 1/1. Its function is as follows. Catalyzes the ATP-dependent amidation of deamido-NAD to form NAD. Uses ammonia as a nitrogen source. This is NH(3)-dependent NAD(+) synthetase from Exiguobacterium sibiricum (strain DSM 17290 / CCUG 55495 / CIP 109462 / JCM 13490 / 255-15).